The sequence spans 295 residues: Aspartate carbamoyltransferase catalytic subunit (295 aa).

Carbamoyl phosphate is bound by residues Arg-49 and Thr-50. Residue Lys-77 participates in L-aspartate binding. Arg-99, His-127, and Gln-130 together coordinate carbamoyl phosphate. 2 residues coordinate L-aspartate: Arg-161 and Arg-212. The carbamoyl phosphate site is built by Gly-251 and Pro-252.

The protein belongs to the aspartate/ornithine carbamoyltransferase superfamily. ATCase family. As to quaternary structure, heterododecamer (2C3:3R2) of six catalytic PyrB chains organized as two trimers (C3), and six regulatory PyrI chains organized as three dimers (R2).

The enzyme catalyses carbamoyl phosphate + L-aspartate = N-carbamoyl-L-aspartate + phosphate + H(+). It functions in the pathway pyrimidine metabolism; UMP biosynthesis via de novo pathway; (S)-dihydroorotate from bicarbonate: step 2/3. In terms of biological role, catalyzes the condensation of carbamoyl phosphate and aspartate to form carbamoyl aspartate and inorganic phosphate, the committed step in the de novo pyrimidine nucleotide biosynthesis pathway. This Campylobacter jejuni subsp. doylei (strain ATCC BAA-1458 / RM4099 / 269.97) protein is Aspartate carbamoyltransferase catalytic subunit.